Consider the following 277-residue polypeptide: Bis(5'-nucleosyl)-tetraphosphatase, symmetrical (277 aa).

The protein belongs to the Ap4A hydrolase family.

It carries out the reaction P(1),P(4)-bis(5'-adenosyl) tetraphosphate + H2O = 2 ADP + 2 H(+). Hydrolyzes diadenosine 5',5'''-P1,P4-tetraphosphate to yield ADP. This chain is Bis(5'-nucleosyl)-tetraphosphatase, symmetrical, found in Chromobacterium violaceum (strain ATCC 12472 / DSM 30191 / JCM 1249 / CCUG 213 / NBRC 12614 / NCIMB 9131 / NCTC 9757 / MK).